A 1025-amino-acid chain; its full sequence is Multidrug resistance protein MdtC (1025 aa).

Transmembrane regions (helical) follow at residues 3–23 (FFAL…AITL), 333–353 (EVEQ…FLFL), 360–380 (IIPA…MYLC), 387–407 (LSLM…IVVL), 431–451 (VGFT…PLLL), 463–483 (FAVT…TLTP), 528–548 (LVGV…ISIP), 853–873 (VILI…LYES), 875–895 (VHPL…LLAL), 897–917 (LFNA…IGIV), 953–973 (PIMM…LSGG), and 984–1004 (ITIV…TPVV).

This sequence belongs to the resistance-nodulation-cell division (RND) (TC 2.A.6) family. MdtC subfamily. Part of a tripartite efflux system composed of MdtA, MdtB and MdtC. MdtC forms a heteromultimer with MdtB.

The protein localises to the cell inner membrane. Its function is as follows. The MdtABC tripartite complex confers resistance against novobiocin and deoxycholate. This Escherichia coli (strain UTI89 / UPEC) protein is Multidrug resistance protein MdtC.